Here is a 347-residue protein sequence, read N- to C-terminus: 3,4-dihydroxy-2-butanone 4-phosphate synthase (347 aa).

The tract at residues 1–200 is DHBP synthase; that stretch reads MPLNRVREAI…ISDLIEYRMQ (200 aa). Residues 27–28, Asp32, 139–143, and Glu163 each bind D-ribulose 5-phosphate; these read RE and RTGHT. Glu28 is a binding site for Mg(2+). Mg(2+) is bound at residue His142. Residues 201–347 are GTP cyclohydrolase II-like; it reads NEMLILIKER…IVLQGGPIQL (147 aa).

This sequence in the N-terminal section; belongs to the DHBP synthase family. The protein in the C-terminal section; belongs to the GTP cyclohydrolase II family. Mg(2+) serves as cofactor. The cofactor is Mn(2+).

It catalyses the reaction D-ribulose 5-phosphate = (2S)-2-hydroxy-3-oxobutyl phosphate + formate + H(+). Its pathway is cofactor biosynthesis; riboflavin biosynthesis; 2-hydroxy-3-oxobutyl phosphate from D-ribulose 5-phosphate: step 1/1. Catalyzes the conversion of D-ribulose 5-phosphate to formate and 3,4-dihydroxy-2-butanone 4-phosphate. The polypeptide is 3,4-dihydroxy-2-butanone 4-phosphate synthase (ribB) (Wolinella succinogenes (strain ATCC 29543 / DSM 1740 / CCUG 13145 / JCM 31913 / LMG 7466 / NCTC 11488 / FDC 602W) (Vibrio succinogenes)).